Reading from the N-terminus, the 184-residue chain is Peptidyl-tRNA hydrolase (184 aa).

Y14 is a binding site for tRNA. The active-site Proton acceptor is the H19. Residues F64, N66, and N112 each contribute to the tRNA site.

The protein belongs to the PTH family. In terms of assembly, monomer.

It localises to the cytoplasm. The enzyme catalyses an N-acyl-L-alpha-aminoacyl-tRNA + H2O = an N-acyl-L-amino acid + a tRNA + H(+). Functionally, hydrolyzes ribosome-free peptidyl-tRNAs (with 1 or more amino acids incorporated), which drop off the ribosome during protein synthesis, or as a result of ribosome stalling. In terms of biological role, catalyzes the release of premature peptidyl moieties from peptidyl-tRNA molecules trapped in stalled 50S ribosomal subunits, and thus maintains levels of free tRNAs and 50S ribosomes. The protein is Peptidyl-tRNA hydrolase of Listeria innocua serovar 6a (strain ATCC BAA-680 / CLIP 11262).